The primary structure comprises 271 residues: Shikimate dehydrogenase (NADP(+)) (271 aa).

Residues 14 to 16 and threonine 61 each bind shikimate; that span reads SKS. The Proton acceptor role is filled by lysine 65. Residues asparagine 86 and aspartate 102 each coordinate shikimate. Residues 126–130, 149–154, and methionine 213 each bind NADP(+); these read GAGGA and NRTFSR. Residue tyrosine 215 coordinates shikimate. Glycine 238 contacts NADP(+).

It belongs to the shikimate dehydrogenase family. Homodimer.

It catalyses the reaction shikimate + NADP(+) = 3-dehydroshikimate + NADPH + H(+). The protein operates within metabolic intermediate biosynthesis; chorismate biosynthesis; chorismate from D-erythrose 4-phosphate and phosphoenolpyruvate: step 4/7. Involved in the biosynthesis of the chorismate, which leads to the biosynthesis of aromatic amino acids. Catalyzes the reversible NADPH linked reduction of 3-dehydroshikimate (DHSA) to yield shikimate (SA). The polypeptide is Shikimate dehydrogenase (NADP(+)) (Histophilus somni (strain 2336) (Haemophilus somnus)).